Here is a 170-residue protein sequence, read N- to C-terminus: Translationally-controlled tumor protein homolog (170 aa).

The TCTP domain maps to 1–170 (MLIYNDILNG…WKHGLKETKV (170 aa)).

This sequence belongs to the TCTP family.

The protein localises to the cytoplasm. Its subcellular location is the cytoskeleton. Functionally, involved in protein synthesis. Involved in microtubule stabilization. The chain is Translationally-controlled tumor protein homolog from Gibberella zeae (strain ATCC MYA-4620 / CBS 123657 / FGSC 9075 / NRRL 31084 / PH-1) (Wheat head blight fungus).